The chain runs to 353 residues: Photosystem II protein D1 (353 aa).

Thr2 is subject to N-acetylthreonine. Phosphothreonine is present on Thr2. 3 helical membrane passes run 29–46 (YIGW…TATS), 118–133 (HFLL…EWEL), and 142–156 (WIAV…AATA). Chlorophyll a is bound at residue His118. Tyr126 contributes to the pheophytin a binding site. [CaMn4O5] cluster contacts are provided by Asp170 and Glu189. Residues 197 to 218 (FHMLGVAGVFGGSLFSAMHGSL) form a helical membrane-spanning segment. Residue His198 coordinates chlorophyll a. Residues His215 and 264–265 (SF) contribute to the a quinone site. His215 serves as a coordination point for Fe cation. A Fe cation-binding site is contributed by His272. The chain crosses the membrane as a helical span at residues 274 to 288 (FLAAWPVVGIWFTAL). [CaMn4O5] cluster is bound by residues His332, Glu333, Asp342, and Ala344. The propeptide occupies 345–353 (ALEVPSING).

Belongs to the reaction center PufL/M/PsbA/D family. As to quaternary structure, PSII is composed of 1 copy each of membrane proteins PsbA, PsbB, PsbC, PsbD, PsbE, PsbF, PsbH, PsbI, PsbJ, PsbK, PsbL, PsbM, PsbT, PsbX, PsbY, PsbZ, Psb30/Ycf12, at least 3 peripheral proteins of the oxygen-evolving complex and a large number of cofactors. It forms dimeric complexes. The D1/D2 heterodimer binds P680, chlorophylls that are the primary electron donor of PSII, and subsequent electron acceptors. It shares a non-heme iron and each subunit binds pheophytin, quinone, additional chlorophylls, carotenoids and lipids. D1 provides most of the ligands for the Mn4-Ca-O5 cluster of the oxygen-evolving complex (OEC). There is also a Cl(-1) ion associated with D1 and D2, which is required for oxygen evolution. The PSII complex binds additional chlorophylls, carotenoids and specific lipids. serves as cofactor. Post-translationally, tyr-161 forms a radical intermediate that is referred to as redox-active TyrZ, YZ or Y-Z. C-terminally processed by CTPA; processing is essential to allow assembly of the oxygen-evolving complex and thus photosynthetic growth.

It is found in the plastid. The protein localises to the chloroplast thylakoid membrane. The enzyme catalyses 2 a plastoquinone + 4 hnu + 2 H2O = 2 a plastoquinol + O2. In terms of biological role, photosystem II (PSII) is a light-driven water:plastoquinone oxidoreductase that uses light energy to abstract electrons from H(2)O, generating O(2) and a proton gradient subsequently used for ATP formation. It consists of a core antenna complex that captures photons, and an electron transfer chain that converts photonic excitation into a charge separation. The D1/D2 (PsbA/PsbD) reaction center heterodimer binds P680, the primary electron donor of PSII as well as several subsequent electron acceptors. This is Photosystem II protein D1 from Agrostis stolonifera (Creeping bentgrass).